Consider the following 305-residue polypeptide: Tetraspanin-12 (305 aa).

The Cytoplasmic portion of the chain corresponds to 1–12; that stretch reads MAREDSVKCLRC. 2 S-palmitoyl cysteine lipidation sites follow: C9 and C12. Residues 13–33 traverse the membrane as a helical segment; sequence LLYALNLLFWLMSISVLAVSA. Over 34 to 59 the chain is Extracellular; it reads WMRDYLNNVLTLTAETRVEEAVILTY. A helical membrane pass occupies residues 60 to 80; that stretch reads FPVVHPVMIAVCCFLIIVGML. The Cytoplasmic portion of the chain corresponds to 81 to 89; that stretch reads GYCGTVKRN. A lipid anchor (S-palmitoyl cysteine) is attached at C83. A helical membrane pass occupies residues 90–110; it reads LLLLAWYFGTLLVIFCVELAC. Residues 111–224 lie on the Extracellular side of the membrane; it reads GVWTYEQEVM…RGTKQLQVLR (114 aa). Residues 225–245 form a helical membrane-spanning segment; that stretch reads FLGISIGVTQILAMILTITLL. Over 246–305 the chain is Cytoplasmic; that stretch reads WALYYDRREPGTDQMLSLKNDTSQHLSCHSVELLKPSLSRIFEHTSMANSFNTHFEMEEL.

It belongs to the tetraspanin (TM4SF) family. As to quaternary structure, interacts (when palmitoylated) with ADAM10. Interacts with MMP14/MT1-MMP. Component of a complex, at least composed of TSPAN12, FZD4 and norrin (NDP). Palmitoylated; required for interaction with ADAM10. Expressed in the neonatal retinal vasculature but not other retinal tissues. Also detected in the neonatal meningeal vasculature and in nonvascular cell types, such as the smooth muscle cells in the neonatal intestine.

It localises to the cell membrane. Regulator of cell surface receptor signal transduction. Acts as a regulator of membrane proteinases such as ADAM10 and MMP14/MT1-MMP. Activates ADAM10-dependent cleavage activity of amyloid precursor protein (APP). Activates MMP14/MT1-MMP-dependent cleavage activity. Plays a central role in retinal vascularization by regulating norrin (NDP) signal transduction. Acts in concert with norrin (NDP) to promote FZD4 multimerization and subsequent activation of FZD4, leading to promote accumulation of beta-catenin (CTNNB1) and stimulate LEF/TCF-mediated transcriptional programs. Suprisingly, it only activate the norrin (NDP)-dependent activation of FZD4, while it does not activate the Wnt-dependent activation of FZD4, suggesting the existence of a Wnt-independent signaling that also promote accumulation the beta-catenin (CTNNB1). The chain is Tetraspanin-12 (Tspan12) from Mus musculus (Mouse).